The sequence spans 197 residues: HTH-type transcriptional regulator BetI (197 aa).

In terms of domain architecture, HTH tetR-type spans 8–68; the sequence is PIRRQQLIEA…ATMRYLMNAL (61 aa). Residues 31 to 50 constitute a DNA-binding region (H-T-H motif); sequence SIALIARLAGVSNGIISHYF.

It participates in amine and polyamine biosynthesis; betaine biosynthesis via choline pathway [regulation]. In terms of biological role, repressor involved in the biosynthesis of the osmoprotectant glycine betaine. It represses transcription of the choline transporter BetT and the genes of BetAB involved in the synthesis of glycine betaine. The protein is HTH-type transcriptional regulator BetI of Pseudomonas fluorescens (strain SBW25).